The primary structure comprises 256 residues: Imidazole glycerol phosphate synthase subunit HisF (256 aa).

Catalysis depends on residues Asp-11 and Asp-130.

Belongs to the HisA/HisF family. Heterodimer of HisH and HisF.

It localises to the cytoplasm. It carries out the reaction 5-[(5-phospho-1-deoxy-D-ribulos-1-ylimino)methylamino]-1-(5-phospho-beta-D-ribosyl)imidazole-4-carboxamide + L-glutamine = D-erythro-1-(imidazol-4-yl)glycerol 3-phosphate + 5-amino-1-(5-phospho-beta-D-ribosyl)imidazole-4-carboxamide + L-glutamate + H(+). Its pathway is amino-acid biosynthesis; L-histidine biosynthesis; L-histidine from 5-phospho-alpha-D-ribose 1-diphosphate: step 5/9. In terms of biological role, IGPS catalyzes the conversion of PRFAR and glutamine to IGP, AICAR and glutamate. The HisF subunit catalyzes the cyclization activity that produces IGP and AICAR from PRFAR using the ammonia provided by the HisH subunit. The polypeptide is Imidazole glycerol phosphate synthase subunit HisF (Prochlorococcus marinus (strain MIT 9215)).